The sequence spans 472 residues: Carbohydrate sulfotransferase 3 (472 aa).

Topologically, residues 1–19 (MEKGLALPQDFRDLVHSLK) are cytoplasmic. Residues 20-38 (IRGRYVLFLAFVVIVFIFI) traverse the membrane as a helical; Signal-anchor for type II membrane protein segment. The Lumenal segment spans residues 39 to 472 (EKENKIISRV…LEERGTFWVT (434 aa)). N-linked (GlcNAc...) asparagine glycosylation is found at N63, N74, and N96. Residue 135–141 (TRTGSSF) coordinates 3'-phosphoadenylyl sulfate. N-linked (GlcNAc...) asparagine glycosylation occurs at N250. 295–303 (RDPRAVLAS) is a 3'-phosphoadenylyl sulfate binding site. N-linked (GlcNAc...) asparagine glycans are attached at residues N413 and N457.

This sequence belongs to the sulfotransferase 1 family. Gal/GlcNAc/GalNAc subfamily. N-glycosylated. In terms of tissue distribution, widely expressed. Highly expressed in spleen, lung, eye and stomach. Constitutively expressed at low level during the mid- to late-gestation period. Expressed in the brain in a temporally controlled manner: peaks at 2 weeks after birth in the cerebellum, but at 3 weeks in the cerebrum. Localizes to stromal cells in the bone marrow, and stromal cells in the marginal zone and red pulp of the spleen, but the sense probe did not.

It is found in the golgi apparatus membrane. It carries out the reaction chondroitin beta-D-glucuronate + n 3'-phosphoadenylyl sulfate = chondroitin 6'-sulfate + n adenosine 3',5'-bisphosphate + n H(+). It catalyses the reaction 3'-phosphoadenylyl sulfate + keratan = adenosine 3',5'-bisphosphate + keratan 6'-sulfate.. Sulfotransferase that utilizes 3'-phospho-5'-adenylyl sulfate (PAPS) as sulfonate donor to catalyze the transfer of sulfate to position 6 of the N-acetylgalactosamine (GalNAc) residue of chondroitin. Chondroitin sulfate constitutes the predominant proteoglycan present in cartilage and is distributed on the surfaces of many cells and extracellular matrices. Catalyzes with a lower efficiency the sulfation of Gal residues of keratan sulfate, another glycosaminoglycan. Can also catalyze the sulfation of the Gal residues in sialyl N-acetyllactosamine (sialyl LacNAc) oligosaccharides. May play a role in the maintenance of naive T-lymphocytes in the spleen. This Mus musculus (Mouse) protein is Carbohydrate sulfotransferase 3 (Chst3).